Consider the following 1072-residue polypeptide: DNA-directed RNA polymerase subunit beta (1072 aa).

The protein belongs to the RNA polymerase beta chain family. In terms of assembly, in plastids the minimal PEP RNA polymerase catalytic core is composed of four subunits: alpha, beta, beta', and beta''. When a (nuclear-encoded) sigma factor is associated with the core the holoenzyme is formed, which can initiate transcription.

The protein localises to the plastid. It is found in the chloroplast. The enzyme catalyses RNA(n) + a ribonucleoside 5'-triphosphate = RNA(n+1) + diphosphate. Its function is as follows. DNA-dependent RNA polymerase catalyzes the transcription of DNA into RNA using the four ribonucleoside triphosphates as substrates. The chain is DNA-directed RNA polymerase subunit beta from Nasturtium officinale (Watercress).